A 238-amino-acid chain; its full sequence is LexA repressor (238 aa).

The segment at residues 26–46 is a DNA-binding region (H-T-H motif); sequence FDEMKDALDLASKSGIHRLIT. Catalysis depends on for autocatalytic cleavage activity residues Ser158 and Lys196.

The protein belongs to the peptidase S24 family. As to quaternary structure, homodimer.

It carries out the reaction Hydrolysis of Ala-|-Gly bond in repressor LexA.. Represses a number of genes involved in the response to DNA damage (SOS response), including recA and lexA. In the presence of single-stranded DNA, RecA interacts with LexA causing an autocatalytic cleavage which disrupts the DNA-binding part of LexA, leading to derepression of the SOS regulon and eventually DNA repair. The polypeptide is LexA repressor (Rhizobium meliloti (strain 1021) (Ensifer meliloti)).